Reading from the N-terminus, the 96-residue chain is Integration host factor subunit beta (96 aa).

Belongs to the bacterial histone-like protein family. In terms of assembly, heterodimer of an alpha and a beta chain.

In terms of biological role, this protein is one of the two subunits of integration host factor, a specific DNA-binding protein that functions in genetic recombination as well as in transcriptional and translational control. In Photobacterium profundum (strain SS9), this protein is Integration host factor subunit beta.